The primary structure comprises 151 residues: Small ribosomal subunit protein uS15 (151 aa).

A disordered region spans residues 1 to 20 (MARLHSGKRGSSGSTRPLRT).

It belongs to the universal ribosomal protein uS15 family. As to quaternary structure, part of the 30S ribosomal subunit.

This is Small ribosomal subunit protein uS15 from Methanococcus maripaludis (strain C5 / ATCC BAA-1333).